The sequence spans 260 residues: Indole-3-glycerol phosphate synthase (260 aa).

The protein belongs to the TrpC family.

It carries out the reaction 1-(2-carboxyphenylamino)-1-deoxy-D-ribulose 5-phosphate + H(+) = (1S,2R)-1-C-(indol-3-yl)glycerol 3-phosphate + CO2 + H2O. It participates in amino-acid biosynthesis; L-tryptophan biosynthesis; L-tryptophan from chorismate: step 4/5. This chain is Indole-3-glycerol phosphate synthase, found in Staphylococcus haemolyticus (strain JCSC1435).